The following is a 121-amino-acid chain: LOB domain-containing protein 23 (121 aa).

The region spanning 4 to 105 is the LOB domain; the sequence is KRCAACKYLR…NELAKTQAEI (102 aa).

This sequence belongs to the LOB domain-containing protein family.

In Arabidopsis thaliana (Mouse-ear cress), this protein is LOB domain-containing protein 23 (LBD23).